The sequence spans 80 residues: Exodeoxyribonuclease 7 small subunit (80 aa).

It belongs to the XseB family. Heterooligomer composed of large and small subunits.

It is found in the cytoplasm. The catalysed reaction is Exonucleolytic cleavage in either 5'- to 3'- or 3'- to 5'-direction to yield nucleoside 5'-phosphates.. Its function is as follows. Bidirectionally degrades single-stranded DNA into large acid-insoluble oligonucleotides, which are then degraded further into small acid-soluble oligonucleotides. In Edwardsiella ictaluri (strain 93-146), this protein is Exodeoxyribonuclease 7 small subunit.